Reading from the N-terminus, the 187-residue chain is Cell division protein SepF (187 aa).

This sequence belongs to the SepF family. Homodimer. Interacts with FtsZ.

It is found in the cytoplasm. Functionally, cell division protein that is part of the divisome complex and is recruited early to the Z-ring. Probably stimulates Z-ring formation, perhaps through the cross-linking of FtsZ protofilaments. Its function overlaps with FtsA. This is Cell division protein SepF from Streptococcus suis (strain 98HAH33).